The chain runs to 773 residues: Elongin-A (773 aa).

The region spanning 4–79 (ESALQVVEKL…AQWKKLVPVE (76 aa)) is the TFIIS N-terminal domain. Over residues 79–93 (ERNNEAEDQDFEKSN) the composition is skewed to basic and acidic residues. Positions 79–480 (ERNNEAEDQD…PRKVPTDVLP (402 aa)) are disordered. Residues 112–124 (YQESWQASGSQPY) show a composition bias toward polar residues. A compositionally biased stretch (basic and acidic residues) spans 136–156 (LPELERPHKVAHGHERRDERK). Low complexity predominate over residues 162-174 (SPPYSSDPESSDY). Position 195 is a phosphoserine (S195). Over residues 239–248 (KPHKSSHKEK) the composition is skewed to basic residues. 2 stretches are compositionally biased toward basic and acidic residues: residues 249 to 265 (RPVD…MGRE) and 271 to 304 (SSKE…EGNS). Residue S310 is modified to Phosphoserine. 2 stretches are compositionally biased toward basic and acidic residues: residues 317–339 (SDNH…KNKQ) and 368–380 (QEGK…DRKS). Phosphoserine occurs at positions 380 and 383. Residue K430 is modified to N6-acetyllysine. S515 carries the post-translational modification Phosphoserine. The interval 521–680 (EAGFTGRRMN…PPRDVRRRQE (160 aa)) is activation domain. The segment at 549–558 (TLHQQCIRVL) is BC-box. Positions 565–609 (IFEVGGVPYSVLEPVLERCTPDQLYRIEECNHVLIEETDQLWKVH) constitute an F-box domain. Residues 671 to 747 (PPRDVRRRQE…VASSSVSYDP (77 aa)) are disordered. Positions 704 to 718 (SSHVPASNSSSSFHS) are enriched in low complexity. A compositionally biased stretch (polar residues) spans 728 to 744 (PSTSSAHLAPVASSSVS).

In terms of assembly, heterotrimer of an A (ELOA, ELOA2 or ELOA3P), ELOB and ELOC subunit. Part of a multisubunit ubiquitin ligase complex consisting of elongin BC complex (ELOB and ELOC), elongin A/ELOA, RBX1 and CUL5. Interacts with ERCC6; the interaction is induced by DNA damaging agents or inhibitors of RNA polymerase II elongation. Interacts (via BC-box) with CUL5.

The protein resides in the nucleus. SIII, also known as elongin, is a general transcription elongation factor that increases the RNA polymerase II transcription elongation past template-encoded arresting sites. Subunit A is transcriptionally active and its transcription activity is strongly enhanced by binding to the dimeric complex of the SIII regulatory subunits B and C (elongin BC complex). Its function is as follows. As part of a multisubunit complex composed of elongin BC complex (ELOB and ELOC), elongin A/ELOA, RBX1 and CUL5; polyubiquitinates monoubiquitinated POLR2A. The protein is Elongin-A (Eloa) of Rattus norvegicus (Rat).